Reading from the N-terminus, the 461-residue chain is Alcaligin biosynthesis enzyme (461 aa).

Residue 9–15 (VAIGIGP) coordinates FAD.

It belongs to the lysine N(6)-hydroxylase/L-ornithine N(5)-oxygenase family. It depends on FAD as a cofactor.

It participates in siderophore biosynthesis; alcaligin biosynthesis. The protein is Alcaligin biosynthesis enzyme (alcA) of Bordetella parapertussis (strain 12822 / ATCC BAA-587 / NCTC 13253).